The primary structure comprises 191 residues: Protein 2 in picA locus (191 aa).

This sequence belongs to the acyltransferase 3 family.

The protein resides in the cell membrane. Seems to regulate the surface properties of the bacterium in the presence of plant cells or plant cell extracts. This is Protein 2 in picA locus from Rhizobium radiobacter (Agrobacterium tumefaciens).